The sequence spans 579 residues: Probable pectinesterase/pectinesterase inhibitor 7 (579 aa).

The signal sequence occupies residues Met1–Ala20. Residues Ser22–Leu185 form a pectinesterase inhibitor 7 region. N-linked (GlcNAc...) asparagine glycans are attached at residues Asn27, Asn115, Asn174, Asn274, Asn277, Asn287, Asn326, and Asn333. Positions Val265–Asp564 are pectinesterase 7. Residue Thr342 participates in substrate binding. Asn359 carries N-linked (GlcNAc...) asparagine glycosylation. Gln372 is a substrate binding site. Asp395 (proton donor; for pectinesterase activity) is an active-site residue. An intrachain disulfide couples Cys409 to Cys429. Asp416 acts as the Nucleophile; for pectinesterase activity in catalysis. Asn462 and Asn475 each carry an N-linked (GlcNAc...) asparagine glycan. The substrate site is built by Arg484 and Trp486. Asn526, Asn533, Asn547, and Asn553 each carry an N-linked (GlcNAc...) asparagine glycan.

The protein in the N-terminal section; belongs to the PMEI family. In the C-terminal section; belongs to the pectinesterase family. In terms of tissue distribution, expressed in siliques.

The protein resides in the secreted. Its subcellular location is the cell wall. It carries out the reaction [(1-&gt;4)-alpha-D-galacturonosyl methyl ester](n) + n H2O = [(1-&gt;4)-alpha-D-galacturonosyl](n) + n methanol + n H(+). It functions in the pathway glycan metabolism; pectin degradation; 2-dehydro-3-deoxy-D-gluconate from pectin: step 1/5. Functionally, acts in the modification of cell walls via demethylesterification of cell wall pectin. This Arabidopsis thaliana (Mouse-ear cress) protein is Probable pectinesterase/pectinesterase inhibitor 7 (PME7).